The following is a 167-amino-acid chain: Peptidoglycan-binding-like protein (167 aa).

The signal sequence occupies residues 1 to 24 (MRSPKVKFLTIFTLSILITKMSFA).

It belongs to the IagB/IpgF/P19 family.

It localises to the periplasm. This Escherichia coli O157:H7 protein is Peptidoglycan-binding-like protein (pbl).